Reading from the N-terminus, the 595-residue chain is Proline--tRNA ligase (595 aa).

A disordered region spans residues 1-22 (MKMSTMFGATLHTAPGRSESEG).

It belongs to the class-II aminoacyl-tRNA synthetase family. ProS type 1 subfamily. As to quaternary structure, homodimer.

Its subcellular location is the cytoplasm. The enzyme catalyses tRNA(Pro) + L-proline + ATP = L-prolyl-tRNA(Pro) + AMP + diphosphate. Functionally, catalyzes the attachment of proline to tRNA(Pro) in a two-step reaction: proline is first activated by ATP to form Pro-AMP and then transferred to the acceptor end of tRNA(Pro). As ProRS can inadvertently accommodate and process non-cognate amino acids such as alanine and cysteine, to avoid such errors it has two additional distinct editing activities against alanine. One activity is designated as 'pretransfer' editing and involves the tRNA(Pro)-independent hydrolysis of activated Ala-AMP. The other activity is designated 'posttransfer' editing and involves deacylation of mischarged Ala-tRNA(Pro). The misacylated Cys-tRNA(Pro) is not edited by ProRS. This is Proline--tRNA ligase from Salinispora tropica (strain ATCC BAA-916 / DSM 44818 / JCM 13857 / NBRC 105044 / CNB-440).